We begin with the raw amino-acid sequence, 216 residues long: Large ribosomal subunit protein uL3 (216 aa).

This sequence belongs to the universal ribosomal protein uL3 family. As to quaternary structure, part of the 50S ribosomal subunit. Forms a cluster with proteins L14 and L19.

Its function is as follows. One of the primary rRNA binding proteins, it binds directly near the 3'-end of the 23S rRNA, where it nucleates assembly of the 50S subunit. This chain is Large ribosomal subunit protein uL3, found in Symbiobacterium thermophilum (strain DSM 24528 / JCM 14929 / IAM 14863 / T).